Here is a 133-residue protein sequence, read N- to C-terminus: Fatty acid-binding protein homolog 2 (133 aa).

Residues arginine 107 and arginine 127 to tyrosine 129 contribute to the a fatty acid site.

It belongs to the calycin superfamily. Fatty-acid binding protein (FABP) family.

Its function is as follows. May play a role in the acquisition, storage, and transport of lipids, and may be important to the organism since it is incapable of synthesizing most of its lipids de novo. The protein is Fatty acid-binding protein homolog 2 (FABP2) of Echinococcus granulosus (Hydatid tapeworm).